A 135-amino-acid polypeptide reads, in one-letter code: Ribosome-binding factor A (135 aa).

This sequence belongs to the RbfA family. In terms of assembly, monomer. Binds 30S ribosomal subunits, but not 50S ribosomal subunits or 70S ribosomes.

The protein resides in the cytoplasm. In terms of biological role, one of several proteins that assist in the late maturation steps of the functional core of the 30S ribosomal subunit. Associates with free 30S ribosomal subunits (but not with 30S subunits that are part of 70S ribosomes or polysomes). Required for efficient processing of 16S rRNA. May interact with the 5'-terminal helix region of 16S rRNA. This is Ribosome-binding factor A from Hyphomonas neptunium (strain ATCC 15444).